Reading from the N-terminus, the 215-residue chain is Cardiolipin synthase (CMP-forming) (215 aa).

5 helical membrane passes run 29–49 (IPNI…WLIL), 60–80 (GWAL…GKLA), 117–137 (LWLT…VGIL), 158–178 (LMYA…ASLA), and 179–199 (AVFG…AGVL).

It belongs to the CDP-alcohol phosphatidyltransferase class-I family. It depends on a divalent metal cation as a cofactor.

Its subcellular location is the cell membrane. It catalyses the reaction a CDP-1,2-diacyl-sn-glycerol + a 1,2-diacyl-sn-glycero-3-phospho-(1'-sn-glycerol) = a cardiolipin + CMP + H(+). Its function is as follows. Catalyzes the synthesis of cardiolipin (CL) (diphosphatidylglycerol) by specifically transferring a phosphatidyl group from CDP-diacylglycerol to phosphatidylglycerol (PG). The protein is Cardiolipin synthase (CMP-forming) of Streptomyces coelicolor (strain ATCC BAA-471 / A3(2) / M145).